The primary structure comprises 539 residues: Chaperonin GroEL 1 (539 aa).

ATP contacts are provided by residues 30 to 33, lysine 51, 87 to 91, glycine 415, 480 to 482, and aspartate 496; these read TLGP, DGTTT, and NAA.

This sequence belongs to the chaperonin (HSP60) family. Forms a cylinder of 14 subunits composed of two heptameric rings stacked back-to-back. Interacts with the co-chaperonin GroES.

Its subcellular location is the cytoplasm. The enzyme catalyses ATP + H2O + a folded polypeptide = ADP + phosphate + an unfolded polypeptide.. Together with its co-chaperonin GroES, plays an essential role in assisting protein folding. The GroEL-GroES system forms a nano-cage that allows encapsulation of the non-native substrate proteins and provides a physical environment optimized to promote and accelerate protein folding. This Erythrobacter litoralis (strain HTCC2594) protein is Chaperonin GroEL 1.